Reading from the N-terminus, the 340-residue chain is Anthranilate phosphoribosyltransferase (340 aa).

5-phospho-alpha-D-ribose 1-diphosphate-binding positions include Gly84, 87–88, Thr92, 94–97, 112–120, and Ser124; these read GD, NIST, and KHGSRSVSS. Gly84 is a binding site for anthranilate. Ser96 provides a ligand contact to Mg(2+). Residue Arg170 participates in anthranilate binding. Residues Asp228 and Glu229 each contribute to the Mg(2+) site.

Belongs to the anthranilate phosphoribosyltransferase family. Homodimer. It depends on Mg(2+) as a cofactor.

It carries out the reaction N-(5-phospho-beta-D-ribosyl)anthranilate + diphosphate = 5-phospho-alpha-D-ribose 1-diphosphate + anthranilate. The protein operates within amino-acid biosynthesis; L-tryptophan biosynthesis; L-tryptophan from chorismate: step 2/5. Functionally, catalyzes the transfer of the phosphoribosyl group of 5-phosphorylribose-1-pyrophosphate (PRPP) to anthranilate to yield N-(5'-phosphoribosyl)-anthranilate (PRA). The polypeptide is Anthranilate phosphoribosyltransferase (Psychromonas ingrahamii (strain DSM 17664 / CCUG 51855 / 37)).